The sequence spans 540 residues: Alanine aminotransferase 2 (540 aa).

Lysine 358 is subject to N6-(pyridoxal phosphate)lysine.

Belongs to the class-I pyridoxal-phosphate-dependent aminotransferase family. Alanine aminotransferase subfamily. In terms of assembly, homodimer. The cofactor is pyridoxal 5'-phosphate.

It catalyses the reaction L-alanine + 2-oxoglutarate = pyruvate + L-glutamate. It participates in amino-acid degradation; L-alanine degradation via transaminase pathway; pyruvate from L-alanine: step 1/1. Catalyzes the reversible transamination between alanine and 2-oxoglutarate to form pyruvate and glutamate. The polypeptide is Alanine aminotransferase 2 (gpt2) (Xenopus laevis (African clawed frog)).